The chain runs to 136 residues: MFQSLIAIDYGKARIGIASGQMITKTATPIGTVEAYDGVPNWIELDKIIKRWNPSDIIIGLPLDTQNFETDITKSAKDFAKEVQQRYQRKVHLINEAYSTREARWRLEEFKSKKISHIKVDALAACVILETWMSEN.

It belongs to the YqgF nuclease family.

The protein localises to the cytoplasm. Functionally, could be a nuclease involved in processing of the 5'-end of pre-16S rRNA. This is Putative pre-16S rRNA nuclease from Francisella tularensis subsp. mediasiatica (strain FSC147).